We begin with the raw amino-acid sequence, 536 residues long: Arginine--tRNA ligase (536 aa).

The 'HIGH' region motif lies at Ala119–His129.

Belongs to the class-I aminoacyl-tRNA synthetase family. Monomer.

It is found in the cytoplasm. It carries out the reaction tRNA(Arg) + L-arginine + ATP = L-arginyl-tRNA(Arg) + AMP + diphosphate. The sequence is that of Arginine--tRNA ligase from Mycoplasma mobile (strain ATCC 43663 / 163K / NCTC 11711) (Mesomycoplasma mobile).